A 294-amino-acid chain; its full sequence is Diaminopimelate epimerase (294 aa).

Residues asparagine 13, glutamine 46, and asparagine 69 each contribute to the substrate site. The Proton donor role is filled by cysteine 78. Substrate is bound by residues 79–80, asparagine 173, asparagine 206, and 224–225; these read GN and ER. The active-site Proton acceptor is cysteine 233. Position 234-235 (234-235) interacts with substrate; it reads GT.

Belongs to the diaminopimelate epimerase family. In terms of assembly, homodimer.

The protein localises to the cytoplasm. It carries out the reaction (2S,6S)-2,6-diaminopimelate = meso-2,6-diaminopimelate. Its pathway is amino-acid biosynthesis; L-lysine biosynthesis via DAP pathway; DL-2,6-diaminopimelate from LL-2,6-diaminopimelate: step 1/1. Functionally, catalyzes the stereoinversion of LL-2,6-diaminopimelate (L,L-DAP) to meso-diaminopimelate (meso-DAP), a precursor of L-lysine and an essential component of the bacterial peptidoglycan. This Variovorax paradoxus (strain S110) protein is Diaminopimelate epimerase.